Reading from the N-terminus, the 126-residue chain is Holo-[acyl-carrier-protein] synthase (126 aa).

Asp8 and Glu57 together coordinate Mg(2+).

Belongs to the P-Pant transferase superfamily. AcpS family. Mg(2+) serves as cofactor.

Its subcellular location is the cytoplasm. The catalysed reaction is apo-[ACP] + CoA = holo-[ACP] + adenosine 3',5'-bisphosphate + H(+). Its function is as follows. Transfers the 4'-phosphopantetheine moiety from coenzyme A to a Ser of acyl-carrier-protein. This Geobacter sulfurreducens (strain ATCC 51573 / DSM 12127 / PCA) protein is Holo-[acyl-carrier-protein] synthase.